Here is a 741-residue protein sequence, read N- to C-terminus: Cysteine--tRNA ligase, cytoplasmic (741 aa).

A Zn(2+)-binding site is contributed by Cys-46. The 'HIGH' region signature appears at 48–58; sequence PTVYDASHMGH. A Phosphoserine modification is found at Ser-297. Residues Cys-340, His-365, and Glu-369 each coordinate Zn(2+). A 'KMSKS' region motif is present at residues 398 to 402; the sequence is KMSKS. Lys-401 provides a ligand contact to ATP. Residues 697 to 718 form a disordered region; it reads FDENGLPTHDKEGKEVSKGQIK. Basic and acidic residues predominate over residues 704–713; sequence THDKEGKEVS.

Belongs to the class-I aminoacyl-tRNA synthetase family. Zn(2+) serves as cofactor.

It localises to the cytoplasm. It catalyses the reaction tRNA(Cys) + L-cysteine + ATP = L-cysteinyl-tRNA(Cys) + AMP + diphosphate. This chain is Cysteine--tRNA ligase, cytoplasmic, found in Drosophila melanogaster (Fruit fly).